The chain runs to 672 residues: tRNA 5-methylaminomethyl-2-thiouridine biosynthesis bifunctional protein MnmC (672 aa).

The tRNA (mnm(5)s(2)U34)-methyltransferase stretch occupies residues 1–241 (MLKVTTAHIH…KRECLQGFKP (241 aa)). The interval 271 to 672 (IGGGISSLFS…RKLLKGTPVK (402 aa)) is FAD-dependent cmnm(5)s(2)U34 oxidoreductase.

The protein in the N-terminal section; belongs to the methyltransferase superfamily. tRNA (mnm(5)s(2)U34)-methyltransferase family. It in the C-terminal section; belongs to the DAO family. The cofactor is FAD.

It localises to the cytoplasm. The catalysed reaction is 5-aminomethyl-2-thiouridine(34) in tRNA + S-adenosyl-L-methionine = 5-methylaminomethyl-2-thiouridine(34) in tRNA + S-adenosyl-L-homocysteine + H(+). Catalyzes the last two steps in the biosynthesis of 5-methylaminomethyl-2-thiouridine (mnm(5)s(2)U) at the wobble position (U34) in tRNA. Catalyzes the FAD-dependent demodification of cmnm(5)s(2)U34 to nm(5)s(2)U34, followed by the transfer of a methyl group from S-adenosyl-L-methionine to nm(5)s(2)U34, to form mnm(5)s(2)U34. The sequence is that of tRNA 5-methylaminomethyl-2-thiouridine biosynthesis bifunctional protein MnmC from Mannheimia succiniciproducens (strain KCTC 0769BP / MBEL55E).